The primary structure comprises 409 residues: Peptidase T (409 aa).

A Zn(2+)-binding site is contributed by histidine 78. The active site involves aspartate 80. Aspartate 140 provides a ligand contact to Zn(2+). The active-site Proton acceptor is the glutamate 173. Glutamate 174, aspartate 196, and histidine 379 together coordinate Zn(2+).

It belongs to the peptidase M20B family. Zn(2+) serves as cofactor.

It is found in the cytoplasm. It carries out the reaction Release of the N-terminal residue from a tripeptide.. Functionally, cleaves the N-terminal amino acid of tripeptides. The chain is Peptidase T from Escherichia coli (strain SE11).